The chain runs to 62 residues: Photosystem II reaction center X protein (62 aa).

The chain crosses the membrane as a helical span at residues 26-46 (IASFFAAALLIVIPAATFLIF).

The protein belongs to the PsbX family. Type 2 subfamily. PSII consists of a core antenna complex that captures photons, and an electron transfer chain that converts photonic excitation into a charge separation. PSII forms dimeric complexes.

The protein localises to the cellular thylakoid membrane. Functionally, involved in the binding and/or turnover of quinones at the Q(B) site of Photosystem II. This is Photosystem II reaction center X protein from Prochlorococcus marinus (strain MIT 9515).